A 172-amino-acid polypeptide reads, in one-letter code: Putative phosphoesterase Bcer98_0945 (172 aa).

Histidine 34 acts as the Proton donor in catalysis. 2 short sequence motifs (HXTX) span residues 34-37 (HITL) and 115-118 (HLTI). Histidine 115 serves as the catalytic Proton acceptor.

The protein belongs to the 2H phosphoesterase superfamily. YjcG family.

The chain is Putative phosphoesterase Bcer98_0945 from Bacillus cytotoxicus (strain DSM 22905 / CIP 110041 / 391-98 / NVH 391-98).